Consider the following 81-residue polypeptide: Photosystem I iron-sulfur center (81 aa).

4Fe-4S ferredoxin-type domains lie at 2 to 31 (SHSVKIYDTCIGCTQCVRACPTDVLEMVPW) and 39 to 68 (IASAPRTEDCVGCKRCESACPTDFLSVRVY). Positions 11, 14, 17, 21, 48, 51, 54, and 58 each coordinate [4Fe-4S] cluster.

The eukaryotic PSI reaction center is composed of at least 11 subunits. The cofactor is [4Fe-4S] cluster.

The protein resides in the plastid. It localises to the chloroplast thylakoid membrane. It catalyses the reaction reduced [plastocyanin] + hnu + oxidized [2Fe-2S]-[ferredoxin] = oxidized [plastocyanin] + reduced [2Fe-2S]-[ferredoxin]. Apoprotein for the two 4Fe-4S centers FA and FB of photosystem I (PSI); essential for photochemical activity. FB is the terminal electron acceptor of PSI, donating electrons to ferredoxin. The C-terminus interacts with PsaA/B/D and helps assemble the protein into the PSI complex. Required for binding of PsaD and PsaE to PSI. PSI is a plastocyanin/cytochrome c6-ferredoxin oxidoreductase, converting photonic excitation into a charge separation, which transfers an electron from the donor P700 chlorophyll pair to the spectroscopically characterized acceptors A0, A1, FX, FA and FB in turn. The protein is Photosystem I iron-sulfur center of Pleurastrum terricola (Filamentous green alga).